A 337-amino-acid chain; its full sequence is tRNA N6-adenosine threonylcarbamoyltransferase (337 aa).

2 residues coordinate Fe cation: His-111 and His-115. Substrate contacts are provided by residues 134–138, Asp-167, Gly-180, and Asn-272; that span reads LVSGG. Asp-300 provides a ligand contact to Fe cation.

Belongs to the KAE1 / TsaD family. The cofactor is Fe(2+).

The protein resides in the cytoplasm. The enzyme catalyses L-threonylcarbamoyladenylate + adenosine(37) in tRNA = N(6)-L-threonylcarbamoyladenosine(37) in tRNA + AMP + H(+). Required for the formation of a threonylcarbamoyl group on adenosine at position 37 (t(6)A37) in tRNAs that read codons beginning with adenine. Is involved in the transfer of the threonylcarbamoyl moiety of threonylcarbamoyl-AMP (TC-AMP) to the N6 group of A37, together with TsaE and TsaB. TsaD likely plays a direct catalytic role in this reaction. The sequence is that of tRNA N6-adenosine threonylcarbamoyltransferase from Escherichia coli (strain K12 / MC4100 / BW2952).